Reading from the N-terminus, the 380-residue chain is Cytochrome b (380 aa).

The next 4 helical transmembrane spans lie at 33 to 53, 77 to 98, 113 to 133, and 178 to 198; these read FGSL…FLAM, WLIR…YLHV, WNIG…GYVL, and FFAF…LHLL. 2 residues coordinate heme b: H83 and H97. Heme b is bound by residues H182 and H196. H201 is a binding site for a ubiquinone. Helical transmembrane passes span 226-246, 288-308, 320-340, and 347-367; these read YKDL…ALFS, LGGV…PLLH, LTQI…WIGG, and FITV…IFIP.

The protein belongs to the cytochrome b family. The cytochrome bc1 complex contains 3 respiratory subunits (MT-CYB, CYC1 and UQCRFS1), 2 core proteins (UQCRC1 and UQCRC2) and probably 6 low-molecular weight proteins. Heme b serves as cofactor.

The protein resides in the mitochondrion inner membrane. Component of the ubiquinol-cytochrome c reductase complex (complex III or cytochrome b-c1 complex) that is part of the mitochondrial respiratory chain. The b-c1 complex mediates electron transfer from ubiquinol to cytochrome c. Contributes to the generation of a proton gradient across the mitochondrial membrane that is then used for ATP synthesis. The sequence is that of Cytochrome b (mt-cyb) from Neocyttus rhomboidalis (Spiky oreo dory).